Here is a 530-residue protein sequence, read N- to C-terminus: Netrin-G2 (530 aa).

An N-terminal signal peptide occupies residues 1–17 (MLHLLALFLHCLPLASG). 3 disulfide bridges follow: Cys22–Cys39, Cys61–Cys81, and Cys69–Cys77. One can recognise a Laminin N-terminal domain in the interval 35–286 (EFYACQPKVM…AISNIEVIGR (252 aa)). The interval 69-88 (CSHENPYLCSNECDASNPDL) is NGL discriminant loop I. Residues Asn122 and Asn128 are each glycosylated (N-linked (GlcNAc...) asparagine). Cysteines 171 and 195 form a disulfide. Residues 201-203 (RWA) form an NGL discriminant loop II region. The interval 264-267 (TYVQ) is NGL discriminant loop III. 15 disulfide bridges follow: Cys287–Cys296, Cys289–Cys305, Cys307–Cys316, Cys319–Cys344, Cys353–Cys362, Cys355–Cys373, Cys376–Cys385, Cys388–Cys406, Cys409–Cys421, Cys411–Cys427, Cys429–Cys438, Cys441–Cys451, Cys456–Cys469, Cys463–Cys475, and Cys477–Cys486. 3 Laminin EGF-like domains span residues 287 to 346 (CKCN…ACAT), 353 to 408 (CECY…VCIE), and 409 to 453 (CNCN…GCYP). N-linked (GlcNAc...) asparagine glycosylation is present at Asn310. An N-linked (GlcNAc...) asparagine glycan is attached at Asn395. N-linked (GlcNAc...) asparagine glycosylation occurs at Asn422. Residue Gly507 is the site of GPI-anchor amidated glycine attachment. A propeptide spans 508–530 (AAPRPATLLGCLLLLGLAARLGR) (removed in mature form).

As to quaternary structure, interacts with LRRC4. Post-translationally, N-glycosylated.

The protein resides in the cell membrane. Its function is as follows. Involved in controlling patterning and neuronal circuit formation at the laminar, cellular, subcellular and synaptic levels. Promotes neurite outgrowth of both axons and dendrites. The polypeptide is Netrin-G2 (Homo sapiens (Human)).